Consider the following 305-residue polypeptide: Alpha-N-acetylgalactosaminide alpha-2,6-sialyltransferase 3 (305 aa).

At 1–8 the chain is on the cytoplasmic side; the sequence is MACILKRK. A helical; Signal-anchor for type II membrane protein membrane pass occupies residues 9 to 29; the sequence is PALAVSFIALCILLLAMRLAN. Residues 30–305 are Lumenal-facing; that stretch reads DVTFPLLLNC…VFTHPNWTVS (276 aa). Cysteines 80 and 229 form a disulfide. Residues Asn-239 and Asn-301 are each glycosylated (N-linked (GlcNAc...) asparagine).

It belongs to the glycosyltransferase 29 family. As to expression, in adults it is highly expressed in spleen, followed by kidney and lesser in lung. Not found in liver and skeletal muscle. In newborns it is abundantly expressed in brain and kidney.

It localises to the golgi apparatus membrane. It catalyses the reaction an alpha-Neu5Ac-(2-&gt;3)-beta-D-Gal-(1-&gt;3)-D-GlcNAc derivative + CMP-N-acetyl-beta-neuraminate = an alpha-Neu5Ac-(2-&gt;3)-beta-D-Gal-(1-&gt;3)-[alpha-Neu5Ac-(2-&gt;6)]-D-GlcNAc derivative + CMP + H(+). The enzyme catalyses a ganglioside GM1b + CMP-N-acetyl-beta-neuraminate = a ganglioside GD1alpha + CMP + H(+). It carries out the reaction a ganglioside GM1b (d18:1(4E)) + CMP-N-acetyl-beta-neuraminate = a ganglioside GD1alpha (d18:1(4E)) + CMP + H(+). The catalysed reaction is a globoside MSGG + CMP-N-acetyl-beta-neuraminate = a globoside DSGG + CMP + H(+). It catalyses the reaction 3-O-[alpha-Neu5Ac-(2-&gt;3)-beta-D-Gal-(1-&gt;3)-alpha-D-GalNAc]-L-Ser-[protein] + CMP-N-acetyl-beta-neuraminate = a 3-O-{alpha-Neu5Ac-(2-&gt;3)-beta-D-Gal-(1-&gt;3)-[alpha-Neu5Ac-(2-&gt;6)]-alpha-D-GalNAc}-L-seryl-[protein] + CMP + H(+). The enzyme catalyses 3-O-[alpha-Neu5Ac-(2-&gt;3)-beta-D-Gal-(1-&gt;3)-alpha-D-GalNAc]-L-Thr-[protein] + CMP-N-acetyl-beta-neuraminate = a 3-O-{alpha-Neu5Ac-(2-&gt;3)-beta-D-Gal-(1-&gt;3)-[alpha-Neu5Ac-(2-&gt;6)]-alpha-D-GalNAc}-L-threonyl-[protein] + CMP + H(+). It functions in the pathway protein modification; protein glycosylation. It participates in glycolipid biosynthesis. Transfers the sialyl group (N-acetyl-alpha-neuraminyl or NeuAc) from CMP-NeuAc to the GalNAc residue on the NeuAc-alpha-2,3-Gal-beta-1,3-GalNAc sequence of glycoproteins and glycolipids forming an alpha-2,6-linkage. Produces branched type disialyl structures by transfer of a sialyl group onto a GalNAc residue inside the backbone core chains. ST6GalNAcIII prefers glycolipids to glycoproteins, predominantly catalyzing the biosynthesis of ganglioside GD1alpha from GM1b. GD1alpha is a critical molecule in the communication and interaction between neuronal cells and their supportive cells, particularly in brain tissues, and functions as an adhesion molecule in the process of metastasis. Sialylation of glycoproteins or glycosphingolipids is very important in tumor development, neuronal development, nerve repair, immunological processes and regulation of hormone sensitivity. The chain is Alpha-N-acetylgalactosaminide alpha-2,6-sialyltransferase 3 (St6galnac3) from Rattus norvegicus (Rat).